Here is a 99-residue protein sequence, read N- to C-terminus: Nucleoid-associated protein SAG1747 (99 aa).

Residues 1-10 (MMNMQNMMRQ) are compositionally biased toward low complexity. Residues 1–20 (MMNMQNMMRQAQKLQKQMEQ) are disordered.

The protein belongs to the YbaB/EbfC family. As to quaternary structure, homodimer.

It is found in the cytoplasm. Its subcellular location is the nucleoid. Functionally, binds to DNA and alters its conformation. May be involved in regulation of gene expression, nucleoid organization and DNA protection. This Streptococcus agalactiae serotype V (strain ATCC BAA-611 / 2603 V/R) protein is Nucleoid-associated protein SAG1747.